The sequence spans 353 residues: Rhodopsin (353 aa).

At 1 to 36 (MNGTEGPYFYIPMLNTTGIVRSPYEYPQYYLVNPAA) the chain is on the extracellular side. N-linked (GlcNAc...) asparagine glycosylation is found at Asn-2 and Asn-15. Residues 37-61 (YAALCAYMFLLILLGFPINFLTLYV) form a helical membrane-spanning segment. Residues 62–73 (TIEHKKLRTPLN) lie on the Cytoplasmic side of the membrane. The chain crosses the membrane as a helical span at residues 74–96 (YILLNLAVANLFMVFGGFTTTMY). The Extracellular portion of the chain corresponds to 97-110 (TSMHGYFVLGRLGC). An intrachain disulfide couples Cys-110 to Cys-187. A helical membrane pass occupies residues 111–133 (NLEGFFATLGGEIGLWSLVVLAV). The 'Ionic lock' involved in activated form stabilization motif lies at 134 to 136 (ERW). Topologically, residues 134–152 (ERWMVVCKPISNFRFTENH) are cytoplasmic. A helical transmembrane segment spans residues 153-173 (AIMGLGFTWFAASACAVPPLV). Residues 174-202 (GWSRYIPEGMQCSCGVDYYTRAEGFNNES) lie on the Extracellular side of the membrane. An N-linked (GlcNAc...) asparagine glycan is attached at Asn-200. Residues 203-224 (FVVYMFVCHFLIPLIVVFFCYG) form a helical membrane-spanning segment. The Cytoplasmic portion of the chain corresponds to 225 to 252 (RLLCAVKEAAAAQQESETTQRAEREVTR). A helical transmembrane segment spans residues 253–274 (MVVIMVIAFLICWCPYAGVAWY). Topologically, residues 275 to 286 (IFSNQGSEFGPL) are extracellular. The helical transmembrane segment at 287 to 308 (FMTIPAFFAKSSSIYNPLIYIF) threads the bilayer. Lys-296 carries the N6-(retinylidene)lysine modification. Over 309–353 (MNKQFRHCMITTLCCGKNPFEEEEGSTTTSKTEASSASSSSVSPA) the chain is Cytoplasmic. Residues Cys-322 and Cys-323 are each lipidated (S-palmitoyl cysteine). Positions 329-353 (EEEEGSTTTSKTEASSASSSSVSPA) are disordered. Low complexity predominate over residues 334–353 (STTTSKTEASSASSSSVSPA).

Belongs to the G-protein coupled receptor 1 family. Opsin subfamily. Phosphorylated on some or all of the serine and threonine residues present in the C-terminal region. Post-translationally, contains one covalently linked retinal chromophore.

Its subcellular location is the membrane. The protein resides in the cell projection. It is found in the cilium. It localises to the photoreceptor outer segment. Its function is as follows. Photoreceptor required for image-forming vision at low light intensity. While most salt water fish species use retinal as chromophore, most freshwater fish use 3-dehydroretinal, or a mixture of retinal and 3-dehydroretinal. Light-induced isomerization of 11-cis to all-trans retinal triggers a conformational change that activates signaling via G-proteins. Subsequent receptor phosphorylation mediates displacement of the bound G-protein alpha subunit by arrestin and terminates signaling. The protein is Rhodopsin (rho) of Solea solea (Common sole).